A 2575-amino-acid chain; its full sequence is Non-reducing polyketide synthase pks11 (2575 aa).

Residues 89 to 228 enclose the Starter acyltransferase (SAT) domain; it reads LANIILSPLV…ASKTVSTLQG (140 aa). The active-site Nucleophile; for transacylase activity is the Cys129. Catalysis depends on His247, which acts as the Proton donor/acceptor; for transacylase activity. In terms of domain architecture, Ketosynthase family 3 (KS3) spans 373 to 790; that stretch reads EDDIAVVGMS…GSNASAVVTE (418 aa). Catalysis depends on for beta-ketoacyl synthase activity residues Cys538, His673, and His713. A Malonyl-CoA:ACP transacylase (MAT) domain is found at 901 to 1192; sequence FGGQISTYVG…TNMASRALGS (292 aa). The segment at 1276–1409 is N-terminal hotdog fold; the sequence is PKGLWSFIDY…GQIIFVSTDN (134 aa). Positions 1276-1586 constitute a PKS/mFAS DH domain; that stretch reads PKGLWSFIDY…YHKVAKATMS (311 aa). Residues 1307 to 1584 form a product template (PT) domain region; it reads LVSGHIIAQT…VNYHKVAKAT (278 aa). Residue His1311 is the Proton acceptor; for dehydratase activity of the active site. The segment at 1437–1586 is C-terminal hotdog fold; sequence ADDIIQGRNI…YHKVAKATMS (150 aa). Residue Asp1493 is the Proton donor; for dehydratase activity of the active site. Over residues 1597–1606 the composition is skewed to polar residues; it reads TTSTSTNVKS. The disordered stretch occupies residues 1597–1636; sequence TTSTSTNVKSSPAAAEGSSPVENGASGSGSKAKKTKSGAG. Positions 1637-1711 constitute a Carrier domain; the sequence is QDVVNKTKGL…GLVQIIKSTL (75 aa). At Ser1671 the chain carries O-(pantetheine 4'-phosphoryl)serine. The segment at 1713 to 1762 is disordered; the sequence is VSDDEEGSDQEGSEASSSESSTTFTPSTTATTVSDVEDNGNEKSIGKEKS. Residues 1714 to 1724 are compositionally biased toward acidic residues; that stretch reads SDDEEGSDQEG. The segment covering 1725 to 1746 has biased composition (low complexity); sequence SEASSSESSTTFTPSTTATTVS. Positions 1752–1762 are enriched in basic and acidic residues; sequence GNEKSIGKEKS. The segment at 1835–2130 is methyltransferase domain; the sequence is LTRIPHDPQH…HIDWTDGNSP (296 aa). A Thioester reductase (TE) domain is found at 2204–2448; that stretch reads ITGATGSLGS…LCWTPVDDVA (245 aa).

The cofactor is pantetheine 4'-phosphate.

Its pathway is secondary metabolite biosynthesis. Functionally, non-reducing polyketide synthase; part of the gene cluster that mediates the biosynthesis of mitorubrinol and mitorubrinic acid, two virulence factors that improve T.marneffei intracellular survival in macrophages. The two polyketide synthases pks12 and pks11 are probably responsible for sequential use in the biosynthesis of mitorubrinol and mitorubrinic acid. The first part of the biosynthesis is probably catalyzed by pks12, which synthesized orsellinic acid. This tetraketide is then used as a starter unit for pks11, which possesses a SAT domain, in the second part of the biosynthesis. Pks11, contains a methyltransferase domain, also served that methylates the products, using a methyl group from S-adenosylmethionine. The polypeptide is Non-reducing polyketide synthase pks11 (Talaromyces marneffei (Penicillium marneffei)).